A 311-amino-acid chain; its full sequence is tRNA dimethylallyltransferase (311 aa).

An ATP-binding site is contributed by 11–18 (GPTAVGKT). Residue 13–18 (TAVGKT) participates in substrate binding. Residues 36-39 (DSMQ) are interaction with substrate tRNA.

The protein belongs to the IPP transferase family. In terms of assembly, monomer. It depends on Mg(2+) as a cofactor.

It carries out the reaction adenosine(37) in tRNA + dimethylallyl diphosphate = N(6)-dimethylallyladenosine(37) in tRNA + diphosphate. Functionally, catalyzes the transfer of a dimethylallyl group onto the adenine at position 37 in tRNAs that read codons beginning with uridine, leading to the formation of N6-(dimethylallyl)adenosine (i(6)A). In Clostridioides difficile (strain 630) (Peptoclostridium difficile), this protein is tRNA dimethylallyltransferase.